A 1026-amino-acid chain; its full sequence is Retinoblastoma-related protein 1 (1026 aa).

The tract at residues 416–616 (TPVSTAMTTA…EKGSSMYNSL (201 aa)) is domain A. A pocket region spans residues 416-872 (TPVSTAMTTA…NEVFIPSVKP (457 aa)). A spacer region spans residues 617 to 737 (AVARPALSVE…PGGGGETCAE (121 aa)). Residues 656-680 (PVPSLPKPEPMSAQNGDPRSPKRPC) form a disordered region. Positions 738–872 (TGISVFFSKI…NEVFIPSVKP (135 aa)) are domain B. Residues 1007-1026 (QNGSSASSSGAPLKSEQPDS) are disordered.

This sequence belongs to the retinoblastoma protein (RB) family.

The protein resides in the nucleus. In terms of biological role, regulator of biological processes that recruits a histone deacetylase to control gene transcription. May play a role in the entry into mitosis, negatively regulating the cell proliferation. Formation of stable complexes with geminiviridae replication-associated proteins may create a cellular environment which favors viral DNA replication. The chain is Retinoblastoma-related protein 1 (RBR1) from Pisum sativum (Garden pea).